The following is a 1461-amino-acid chain: Formin-3 (1461 aa).

2 disordered regions span residues 1-67 (MASK…SDDN) and 431-457 (YREESHTPHGNTTRKTSTPVSNNRPTT). Low complexity predominate over residues 12–28 (TSRSIQSRNSSYSTSSN). 2 stretches are compositionally biased toward polar residues: residues 29 to 53 (ERIGTPSTISLSENSDLSKLQSTND) and 438 to 457 (PHGNTTRKTSTPVSNNRPTT). One can recognise a GBD/FH3 domain in the interval 92–508 (SETEQLRKIY…KIQKSMQLLT (417 aa)). The tract at residues 137–515 (QHTVLDEATY…LLTHTLEALE (379 aa)) is interaction with tea4. Positions 540 to 639 (GTAEEIAEYK…VQNSNEQHLQ (100 aa)) form a coiled coil. The segment at 683–811 (GIPVRVHTPS…EPKIDETSLT (129 aa)) is disordered. The segment covering 700-718 (SFSGSEISSSPSPLLPDVS) has biased composition (low complexity). Over residues 731–784 (SPPPPPPAVIVPTPAPAPIPVPPPAPIMGGPPPPPPPPGVAGAGPPPPPPPPPA) the composition is skewed to pro residues. Positions 801 to 811 (PEPKIDETSLT) are enriched in basic and acidic residues. An FH2 domain is found at 845–1257 (LRDLHKPTRP…RIMSEDRDKL (413 aa)). 2 disordered regions span residues 1268 to 1337 (AKYR…AEEK) and 1416 to 1461 (ERLQ…RQKQ). Composition is skewed to basic and acidic residues over residues 1273 to 1315 (KREL…KTGD) and 1325 to 1337 (MEDLEKPDYAEEK). Over residues 1445–1454 (TNGSNASNLV) the composition is skewed to polar residues.

The protein belongs to the formin homology family. In terms of assembly, interacts with rax2, rho3 and tea4. Interacts with tea1 in the presence of tea4.

It is found in the cytoplasm. The protein resides in the cell cortex. The protein localises to the cell tip. Involved in controlling polarized cell growth. Required for interphase actin cable formation and microtubule organization. In Schizosaccharomyces pombe (strain 972 / ATCC 24843) (Fission yeast), this protein is Formin-3 (for3).